Reading from the N-terminus, the 252-residue chain is uncharacterized protein (252 aa).

16–40 (LVTGASDGIGREAAMTYARYGATVI) serves as a coordination point for NADP(+). A substrate-binding site is contributed by S152. Y165 (proton acceptor) is an active-site residue.

The protein belongs to the short-chain dehydrogenases/reductases (SDR) family.

This is an uncharacterized protein from Escherichia coli (strain K12).